The chain runs to 277 residues: Indole-3-glycerol phosphate synthase (277 aa).

The protein belongs to the TrpC family.

The enzyme catalyses 1-(2-carboxyphenylamino)-1-deoxy-D-ribulose 5-phosphate + H(+) = (1S,2R)-1-C-(indol-3-yl)glycerol 3-phosphate + CO2 + H2O. It functions in the pathway amino-acid biosynthesis; L-tryptophan biosynthesis; L-tryptophan from chorismate: step 4/5. The polypeptide is Indole-3-glycerol phosphate synthase (Pseudomonas putida (strain ATCC 47054 / DSM 6125 / CFBP 8728 / NCIMB 11950 / KT2440)).